Here is a 175-residue protein sequence, read N- to C-terminus: MSRVAKKPVSLPKGVELNVQSELVSVKGPKGTLTLPKPTGVEIAIDGDVATLSANDPSQIAITGTVRAILANMVKGVSEGFERKLELVGVGYRAAMQGKDLSLALGFSHPLVFVAPEGITLSTPTQTEILVQGADKQRVGEVAAKIRGFRPPEPYKGKGVKYAGEVIIRKEAKKA.

Belongs to the universal ribosomal protein uL6 family. As to quaternary structure, part of the 50S ribosomal subunit.

In terms of biological role, this protein binds to the 23S rRNA, and is important in its secondary structure. It is located near the subunit interface in the base of the L7/L12 stalk, and near the tRNA binding site of the peptidyltransferase center. This is Large ribosomal subunit protein uL6 from Xanthomonas oryzae pv. oryzae (strain MAFF 311018).